We begin with the raw amino-acid sequence, 69 residues long: DNA-directed RNA polymerase subunit epsilon (69 aa).

It belongs to the RNA polymerase subunit epsilon family. Monomer. RNAP is composed of a core of 2 alpha, a beta and a beta' subunit. The core is associated with a delta subunit, and at least one of epsilon or omega. When a sigma factor is associated with the core the holoenzyme is formed, which can initiate transcription.

The protein localises to the cytoplasm. It is found in the nucleoid. The catalysed reaction is RNA(n) + a ribonucleoside 5'-triphosphate = RNA(n+1) + diphosphate. In terms of biological role, a non-essential component of RNA polymerase (RNAP). Has a similar structure to bacteriophage T7 protein Gp2 (AC P03704), which is known to bind to RNAP in the DNA binding-cleft. Unlike Gp2 however, this protein does not inhibit transcription initiation. In vitro reconstitution experiments show this subunit is dispensible. This is DNA-directed RNA polymerase subunit epsilon from Bacillus subtilis (strain 168).